The primary structure comprises 344 residues: S-adenosylmethionine:tRNA ribosyltransferase-isomerase (344 aa).

It belongs to the QueA family. As to quaternary structure, monomer.

Its subcellular location is the cytoplasm. It carries out the reaction 7-aminomethyl-7-carbaguanosine(34) in tRNA + S-adenosyl-L-methionine = epoxyqueuosine(34) in tRNA + adenine + L-methionine + 2 H(+). Its pathway is tRNA modification; tRNA-queuosine biosynthesis. In terms of biological role, transfers and isomerizes the ribose moiety from AdoMet to the 7-aminomethyl group of 7-deazaguanine (preQ1-tRNA) to give epoxyqueuosine (oQ-tRNA). The protein is S-adenosylmethionine:tRNA ribosyltransferase-isomerase of Lactiplantibacillus plantarum (strain ATCC BAA-793 / NCIMB 8826 / WCFS1) (Lactobacillus plantarum).